Here is a 193-residue protein sequence, read N- to C-terminus: Penicillin-binding protein activator LpoB (193 aa).

A signal peptide spans 1 to 16 (MKRYLSVALAALVLTG). The N-palmitoyl cysteine moiety is linked to residue Cys-17. Cys-17 carries the S-diacylglycerol cysteine lipid modification. Residues 24 to 55 (EPTTPPVTIEPVTPPVPETPPPVDNVPPPPKM) form a disordered region. Residues 35-54 (VTPPVPETPPPVDNVPPPPK) show a composition bias toward pro residues.

Belongs to the LpoB family. Interacts with PBP1b.

It localises to the cell outer membrane. Its function is as follows. Regulator of peptidoglycan synthesis that is essential for the function of penicillin-binding protein 1B (PBP1b). The chain is Penicillin-binding protein activator LpoB from Yersinia enterocolitica serotype O:8 / biotype 1B (strain NCTC 13174 / 8081).